Reading from the N-terminus, the 58-residue chain is Large ribosomal subunit protein uL30 (58 aa).

The protein belongs to the universal ribosomal protein uL30 family. As to quaternary structure, part of the 50S ribosomal subunit.

The chain is Large ribosomal subunit protein uL30 from Desulfovibrio desulfuricans (strain ATCC 27774 / DSM 6949 / MB).